A 257-amino-acid chain; its full sequence is Diphthine synthase (257 aa).

S-adenosyl-L-methionine contacts are provided by residues leucine 9, aspartate 83, methionine 86, 111–112 (SI), and isoleucine 163.

The protein belongs to the diphthine synthase family. Homodimer.

The enzyme catalyses 2-[(3S)-amino-3-carboxypropyl]-L-histidyl-[translation elongation factor 2] + 3 S-adenosyl-L-methionine = diphthine-[translation elongation factor 2] + 3 S-adenosyl-L-homocysteine + 3 H(+). The protein operates within protein modification; peptidyl-diphthamide biosynthesis. S-adenosyl-L-methionine-dependent methyltransferase that catalyzes the trimethylation of the amino group of the modified target histidine residue in translation elongation factor 2 (EF-2), to form an intermediate called diphthine. The three successive methylation reactions represent the second step of diphthamide biosynthesis. This Thermoplasma acidophilum (strain ATCC 25905 / DSM 1728 / JCM 9062 / NBRC 15155 / AMRC-C165) protein is Diphthine synthase.